Reading from the N-terminus, the 315-residue chain is MKLKFFVLALCVPAIFTTHATTNYPLFIPDNISTDISLGSLSGKTKERVYHPKEGGRKISQLDWKYSNATIVRGGIDWKLIPKVSFGVSGWTTLGNQKASMVDKDWNNSNTPQVWTDQSWHPNTHLRDANEFELNLKGWLLNNLDYRLGLIAGYQESRYSFNAMGGSYIYSENGGSRNKKGAHPSGERTIGYKQLFKIPYIGLTANYRHENFEFGAELKYSGWVLSSDTDKHYQTETIFKDEIKNQNYCSVAANIGYYVTPSAKFYIEGSRNYISNKKGDTSLYEQSTNISGTIKNSASIEYIGFLTSAGIKYIF.

Residues 1-20 form the signal peptide; sequence MKLKFFVLALCVPAIFTTHA. Catalysis depends on residues aspartate 103, aspartate 105, aspartate 230, and histidine 232.

This sequence belongs to the peptidase A26 family.

The protein localises to the cell outer membrane. Its function is as follows. Protease responsible for the cleavage of IcsA between 'Arg-758' and 'Arg-759', removing the entire alpha domain from IscA localized on the bacterial surface. This proteolytic activity contributes to the maintenance of a tight polar cap of IcsA, which is important to Shigella actin-based motility. The polypeptide is Outer membrane protease IcsP (icsP) (Shigella flexneri).